The chain runs to 1140 residues: uncharacterized protein (1140 aa).

7 disordered regions span residues 1–49 (MGSS…TSPE), 97–243 (SSDI…STIS), 280–427 (TSSS…KSSV), 512–541 (ASST…DLSK), 702–747 (FSTP…STAS), 916–1059 (CPEK…PIGR), and 1080–1103 (LSSS…GTSS). Residues 105–129 (VNDVESSTSGPSNSYSALSSTNAQL) show a composition bias toward polar residues. Composition is skewed to low complexity over residues 130–154 (SSST…TSSS), 172–214 (TTAS…TTSD), and 221–243 (SSST…STIS). The segment covering 516–528 (LGSKVSSSNSRMA) has biased composition (polar residues). 2 stretches are compositionally biased toward low complexity: residues 529–541 (TSKT…DLSK) and 703–718 (STPE…VTSE). Over residues 719–733 (APSTVSSMTTSAPFI) the composition is skewed to polar residues. Over residues 734–747 (NNSTSARPSPSTAS) the composition is skewed to low complexity. Residues 949–961 (SFKDMKTSQETKK) show a composition bias toward basic and acidic residues. Over residues 977 to 997 (EKTSPTTKASPSTSPSESKAA) the composition is skewed to low complexity. 3 stretches are compositionally biased toward polar residues: residues 998 to 1023 (GNTS…STSV), 1031 to 1055 (TKNS…STES), and 1089 to 1103 (RSTT…GTSS).

This is an uncharacterized protein from Saccharomyces cerevisiae (strain ATCC 204508 / S288c) (Baker's yeast).